A 199-amino-acid chain; its full sequence is Putative acetyltransferase SAR2635 (199 aa).

It belongs to the transferase hexapeptide repeat family.

The chain is Putative acetyltransferase SAR2635 from Staphylococcus aureus (strain MRSA252).